A 417-amino-acid polypeptide reads, in one-letter code: Serine hydroxymethyltransferase (417 aa).

Residues leucine 120 and 124-126 (GHL) each bind (6S)-5,6,7,8-tetrahydrofolate. Lysine 229 is modified (N6-(pyridoxal phosphate)lysine).

The protein belongs to the SHMT family. Homodimer. The cofactor is pyridoxal 5'-phosphate.

The protein resides in the cytoplasm. It catalyses the reaction (6R)-5,10-methylene-5,6,7,8-tetrahydrofolate + glycine + H2O = (6S)-5,6,7,8-tetrahydrofolate + L-serine. It participates in one-carbon metabolism; tetrahydrofolate interconversion. It functions in the pathway amino-acid biosynthesis; glycine biosynthesis; glycine from L-serine: step 1/1. In terms of biological role, catalyzes the reversible interconversion of serine and glycine with tetrahydrofolate (THF) serving as the one-carbon carrier. This reaction serves as the major source of one-carbon groups required for the biosynthesis of purines, thymidylate, methionine, and other important biomolecules. Also exhibits THF-independent aldolase activity toward beta-hydroxyamino acids, producing glycine and aldehydes, via a retro-aldol mechanism. The protein is Serine hydroxymethyltransferase of Anaeromyxobacter dehalogenans (strain 2CP-C).